The sequence spans 198 residues: FMN-dependent NADH:quinone oxidoreductase (198 aa).

FMN contacts are provided by residues S10, 16–18 (SQS), 94–97 (MYNF), and 138–141 (TRGG).

This sequence belongs to the azoreductase type 1 family. In terms of assembly, homodimer. FMN serves as cofactor.

It carries out the reaction 2 a quinone + NADH + H(+) = 2 a 1,4-benzosemiquinone + NAD(+). It catalyses the reaction N,N-dimethyl-1,4-phenylenediamine + anthranilate + 2 NAD(+) = 2-(4-dimethylaminophenyl)diazenylbenzoate + 2 NADH + 2 H(+). Its function is as follows. Quinone reductase that provides resistance to thiol-specific stress caused by electrophilic quinones. In terms of biological role, also exhibits azoreductase activity. Catalyzes the reductive cleavage of the azo bond in aromatic azo compounds to the corresponding amines. The polypeptide is FMN-dependent NADH:quinone oxidoreductase (Shewanella sp. (strain MR-4)).